Consider the following 448-residue polypeptide: Exodeoxyribonuclease 7 large subunit (448 aa).

It belongs to the XseA family. Heterooligomer composed of large and small subunits.

The protein resides in the cytoplasm. It is found in the nucleoid. The enzyme catalyses Exonucleolytic cleavage in either 5'- to 3'- or 3'- to 5'-direction to yield nucleoside 5'-phosphates.. Bidirectionally degrades single-stranded DNA into large acid-insoluble oligonucleotides, which are then degraded further into small acid-soluble oligonucleotides. The sequence is that of Exodeoxyribonuclease 7 large subunit from Bacillus subtilis (strain 168).